A 355-amino-acid chain; its full sequence is F-box only protein 32 (355 aa).

The Nuclear localization signal signature appears at 62–67 (KKRKKD). The Nuclear export signal signature appears at 169–173 (LLQTL). The F-box domain maps to 223–271 (LTFTDLPLCLQLNIMQRLSDGRDLVSLGQVAPDLHVLSEDRLLWKKLCQ). Residues 280 to 295 (RKRLILSDKGQLDWKK) carry the Bipartite nuclear localization signal motif.

Part of the SCF (SKP1-CUL1-F-box) E3 ubiquitin-protein ligase complex SCF(FBXO32) formed of CUL1, SKP1, RBX1 and FBXO32.

It is found in the cytoplasm. Its subcellular location is the nucleus. The protein operates within protein modification; protein ubiquitination. Functionally, substrate recognition component of a SCF (SKP1-CUL1-F-box protein) E3 ubiquitin-protein ligase complex which mediates the ubiquitination and subsequent proteasomal degradation of target proteins. Probably recognizes and binds to phosphorylated target proteins during skeletal muscle atrophy. Recognizes TERF1. The chain is F-box only protein 32 (FBXO32) from Bos taurus (Bovine).